A 196-amino-acid polypeptide reads, in one-letter code: Large ribosomal subunit protein mL66 (196 aa).

Residues 1–34 (MAALRRLVSGCGRQLQAFLAGPAATGWLWLPARG) constitute a mitochondrion transit peptide.

It belongs to the bacterial ribosomal protein bS18 family. Mitochondrion-specific ribosomal protein mL66 subfamily. As to quaternary structure, component of the mitochondrial ribosome small subunit (28S) which comprises a 12S rRNA and about 30 distinct proteins.

The protein localises to the mitochondrion. The sequence is that of Large ribosomal subunit protein mL66 (Mrps18a) from Mus musculus (Mouse).